Here is a 366-residue protein sequence, read N- to C-terminus: Putative ankyrin repeat protein RBE_0601 (366 aa).

ANK repeat units lie at residues 39 to 68 (KHGT…DINE), 94 to 124 (LPDE…DVNT), 131 to 160 (HGGA…IASQ), 162 to 186 (VISA…TAHD), 210 to 239 (KSSN…NPNA), and 250 to 280 (IALS…DTSK).

The protein is Putative ankyrin repeat protein RBE_0601 of Rickettsia bellii (strain RML369-C).